The primary structure comprises 291 residues: ATP synthase gamma chain (291 aa).

Belongs to the ATPase gamma chain family. As to quaternary structure, F-type ATPases have 2 components, CF(1) - the catalytic core - and CF(0) - the membrane proton channel. CF(1) has five subunits: alpha(3), beta(3), gamma(1), delta(1), epsilon(1). CF(0) has three main subunits: a, b and c.

The protein resides in the cell membrane. In terms of biological role, produces ATP from ADP in the presence of a proton gradient across the membrane. The gamma chain is believed to be important in regulating ATPase activity and the flow of protons through the CF(0) complex. This chain is ATP synthase gamma chain, found in Streptococcus pyogenes serotype M3 (strain ATCC BAA-595 / MGAS315).